The chain runs to 92 residues: uncharacterized protein (92 aa).

The HTH arsR-type domain occupies 1–92 (MNGNKDAIFK…LKNLLKGWIE (92 aa)). The H-T-H motif DNA-binding region spans 37 to 61 (IRLITKYDLSITRQAIAKHLSVLED).

This is an uncharacterized protein from Bacillus subtilis (strain 168).